The sequence spans 228 residues: 3,4-dihydroxy-2-butanone 4-phosphate synthase (228 aa).

Residues 37–38 (RE), D42, 150–154 (RPGHT), and E174 contribute to the D-ribulose 5-phosphate site. E38 contributes to the Mg(2+) binding site. Residue H153 coordinates Mg(2+).

This sequence belongs to the DHBP synthase family. As to quaternary structure, homodimer. Requires Mg(2+) as cofactor. Mn(2+) is required as a cofactor.

The catalysed reaction is D-ribulose 5-phosphate = (2S)-2-hydroxy-3-oxobutyl phosphate + formate + H(+). It functions in the pathway cofactor biosynthesis; riboflavin biosynthesis; 2-hydroxy-3-oxobutyl phosphate from D-ribulose 5-phosphate: step 1/1. Its function is as follows. Catalyzes the conversion of D-ribulose 5-phosphate to formate and 3,4-dihydroxy-2-butanone 4-phosphate. This is 3,4-dihydroxy-2-butanone 4-phosphate synthase from Chloroherpeton thalassium (strain ATCC 35110 / GB-78).